The sequence spans 296 residues: Phosphatidylglycerol--prolipoprotein diacylglyceryl transferase (296 aa).

The next 4 helical transmembrane spans lie at 28 to 48, 72 to 92, 110 to 130, and 139 to 159; these read WYGL…IYLA, FALY…ILFY, GGLA…IFSW, and LTFL…AFMI. Residue Arg-160 participates in a 1,2-diacyl-sn-glycero-3-phospho-(1'-sn-glycerol) binding. 3 helical membrane passes run 197-217, 226-246, and 263-283; these read VQLY…FLSY, GWVT…AEFF, and GQIL…ACFL.

This sequence belongs to the Lgt family.

The protein resides in the cell inner membrane. The catalysed reaction is L-cysteinyl-[prolipoprotein] + a 1,2-diacyl-sn-glycero-3-phospho-(1'-sn-glycerol) = an S-1,2-diacyl-sn-glyceryl-L-cysteinyl-[prolipoprotein] + sn-glycerol 1-phosphate + H(+). It functions in the pathway protein modification; lipoprotein biosynthesis (diacylglyceryl transfer). Catalyzes the transfer of the diacylglyceryl group from phosphatidylglycerol to the sulfhydryl group of the N-terminal cysteine of a prolipoprotein, the first step in the formation of mature lipoproteins. The sequence is that of Phosphatidylglycerol--prolipoprotein diacylglyceryl transferase from Chlamydia caviae (strain ATCC VR-813 / DSM 19441 / 03DC25 / GPIC) (Chlamydophila caviae).